Reading from the N-terminus, the 556-residue chain is Formate--tetrahydrofolate ligase (556 aa).

65–72 contributes to the ATP binding site; it reads TPAGEGKS.

It belongs to the formate--tetrahydrofolate ligase family.

It carries out the reaction (6S)-5,6,7,8-tetrahydrofolate + formate + ATP = (6R)-10-formyltetrahydrofolate + ADP + phosphate. It functions in the pathway one-carbon metabolism; tetrahydrofolate interconversion. This Clostridium perfringens (strain 13 / Type A) protein is Formate--tetrahydrofolate ligase.